We begin with the raw amino-acid sequence, 391 residues long: MLPVTSRRHFTMSLYMLRSSSPHINHHSFLLPSFVSSKFKHHTLSPPPSPPPPPPMAACIDTCRTGKPQISPRDSSKHHDDESGFRYMNYFRYPDRSSFNGTQTKTLHTRPLLEDLDRDAEVDDVWAKIREEAKSDIAKEPIVSAYYHASIVSQRSLEAALANTLSVKLSNLNLPSNTLFDLFSGVLQGNPDIVESVKLDLLAVKERDPACISYVHCFLHFKGFLACQAHRIAHELWTQDRKILALLIQNRVSEAFAVDFHPGAKIGTGILLDHATAIVIGETAVVGNNVSILHNVTLGGTGKQCGDRHPKIGDGVLIGAGTCILGNITIGEGAKIGAGSVVLKDVPPRTTAVGNPARLLGGKDNPKTHDKIPGLTMDQTSHISEWSDYVI.

Disordered regions lie at residues 40–82 (KHHT…HDDE) and 353–375 (VGNP…IPGL). The segment covering 45–56 (SPPPSPPPPPPM) has biased composition (pro residues).

It belongs to the transferase hexapeptide repeat family. Homomultimer. Interacts with OASC. Component of the cysteine synthase complex (CSC) composed of two OAS-TL dimers and one SAT hexamer. As to expression, ubiquitous with higher levels in leaves and siliques. Localized in vascular tissues, particularly in phloem.

Its subcellular location is the mitochondrion. It carries out the reaction L-serine + acetyl-CoA = O-acetyl-L-serine + CoA. The protein operates within amino-acid biosynthesis; L-cysteine biosynthesis; L-cysteine from L-serine: step 1/2. The chain is Serine acetyltransferase 3, mitochondrial (SAT3) from Arabidopsis thaliana (Mouse-ear cress).